The primary structure comprises 551 residues: Arginine--tRNA ligase (551 aa).

Positions 123 to 133 (ANPTGPLTIGR) match the 'HIGH' region motif.

It belongs to the class-I aminoacyl-tRNA synthetase family. In terms of assembly, monomer.

The protein resides in the cytoplasm. It carries out the reaction tRNA(Arg) + L-arginine + ATP = L-arginyl-tRNA(Arg) + AMP + diphosphate. The protein is Arginine--tRNA ligase of Chlorobaculum parvum (strain DSM 263 / NCIMB 8327) (Chlorobium vibrioforme subsp. thiosulfatophilum).